The primary structure comprises 856 residues: MSGRDNRGAGGGGGGHQPLSNAMGKLKEKLTRVGDELGYHRVESNLSTSNTATSLDTILPEDPFLFPQVSPQRHPQTVRTQRLLEDEPPLSFRPLLEDDDINEPPTQQPHRSPLRASGSLELTPLPPPPTSLEIREHRDRQQRGAQGDELQRSKQSLKGSRVSFERRDTGNSNTNNNKAAESSDEDSFEEKRTGFQQQKATSVDHKGILKDLKHILANDNRRQFQAKKHVSLDVKGTRFLQDLLKESSSEEEFHKTRREFQGRKHQSLDPRVTFKLDKVLQGSSTDSDEEGEDAEHKRLIHRPKDITKPVIIDLKDLESESDEDFLTSRQHFQQQRSISTDSRKSRRLYEMDEMGNKRGENIRHAVPFVRQITEDGKPKLEVYRPTTNPIFIWTQVLAALSVSLGSLVVGFVSAYTSPALVSMTDRNITSFEVTQDAGSWVGGIMPLAGLAGGIAGGPLIEYLGRRNTILATAVPFIVSSLLIACAVNVAMVLCGRFLAGFCVGIASLSLPVYLGETVQPEVRGTLGLLPTAFGNIGILLCFVAGSFMNWSMLAFLGAALPVPFLILMFLIPETPRWFVSRGREERARKALSWLRGKEADVEPELKGLMRSQADADRQATQNTMLELLKRNNLKPLSISLGLMFFQQLSGINAVIFYTVQIFKDAGSTIDGNICTIIVGVVNFLATFIGIVLIDRAGRKILLYVSNIAMILTLFVLGGFFYCKAHGPDVSNLGWLPLTCFVIYILGFSLGFGPIPWLMMGEILPAKIRGSAASVATAFNWSCTFVVTKTFQDLTVAMGAHGAFWLFGAICFVGLFFVIIYVPETQGKTLEDIERKMMGRVRRMSSVANIKPLSFNM.

Disordered stretches follow at residues 1-27 and 62-202; these read MSGR…GKLK and DPFL…KATS. At 1-389 the chain is on the cytoplasmic side; it reads MSGRDNRGAG…LEVYRPTTNP (389 aa). The span at 69–80 shows a compositional bias: polar residues; sequence VSPQRHPQTVRT. Residues 133 to 142 show a composition bias toward basic and acidic residues; the sequence is EIREHRDRQQ. The span at 170 to 180 shows a compositional bias: polar residues; that stretch reads GNSNTNNNKAA. Residues serine 247, serine 248, serine 249, serine 319, and serine 321 each carry the phosphoserine modification. Residues 326–345 are disordered; the sequence is LTSRQHFQQQRSISTDSRKS. Positions 329-340 are enriched in polar residues; it reads RQHFQQQRSIST. The helical transmembrane segment at 390–410 threads the bilayer; that stretch reads IFIWTQVLAALSVSLGSLVVG. The Extracellular portion of the chain corresponds to 411 to 439; it reads FVSAYTSPALVSMTDRNITSFEVTQDAGS. A glycan (N-linked (GlcNAc...) asparagine) is linked at asparagine 427. A helical transmembrane segment spans residues 440–460; that stretch reads WVGGIMPLAGLAGGIAGGPLI. Residues 461–472 are Cytoplasmic-facing; the sequence is EYLGRRNTILAT. The chain crosses the membrane as a helical span at residues 473–493; that stretch reads AVPFIVSSLLIACAVNVAMVL. Topologically, residues 494 to 496 are extracellular; the sequence is CGR. The helical transmembrane segment at 497–517 threads the bilayer; that stretch reads FLAGFCVGIASLSLPVYLGET. Residues 518–527 are Cytoplasmic-facing; the sequence is VQPEVRGTLG. The chain crosses the membrane as a helical span at residues 528 to 548; that stretch reads LLPTAFGNIGILLCFVAGSFM. Asparagine 549 carries N-linked (GlcNAc...) asparagine glycosylation. The Extracellular segment spans residues 549–551; the sequence is NWS. The helical transmembrane segment at 552 to 572 threads the bilayer; that stretch reads MLAFLGAALPVPFLILMFLIP. The Cytoplasmic segment spans residues 573–635; that stretch reads ETPRWFVSRG…ELLKRNNLKP (63 aa). A helical transmembrane segment spans residues 636 to 656; sequence LSISLGLMFFQQLSGINAVIF. Over 657-672 the chain is Extracellular; it reads YTVQIFKDAGSTIDGN. Residues 673–693 form a helical membrane-spanning segment; that stretch reads ICTIIVGVVNFLATFIGIVLI. Over 694 to 699 the chain is Cytoplasmic; it reads DRAGRK. A helical transmembrane segment spans residues 700–720; sequence ILLYVSNIAMILTLFVLGGFF. At 721 to 739 the chain is on the extracellular side; that stretch reads YCKAHGPDVSNLGWLPLTC. Residues 740-760 form a helical membrane-spanning segment; sequence FVIYILGFSLGFGPIPWLMMG. Residues 761 to 766 are Cytoplasmic-facing; that stretch reads EILPAK. The chain crosses the membrane as a helical span at residues 767 to 787; that stretch reads IRGSAASVATAFNWSCTFVVT. Topologically, residues 788–800 are extracellular; that stretch reads KTFQDLTVAMGAH. The chain crosses the membrane as a helical span at residues 801 to 821; that stretch reads GAFWLFGAICFVGLFFVIIYV. Residues 822-856 lie on the Cytoplasmic side of the membrane; it reads PETQGKTLEDIERKMMGRVRRMSSVANIKPLSFNM. 2 positions are modified to phosphoserine: serine 844 and serine 845.

The protein belongs to the major facilitator superfamily. Sugar transporter (TC 2.A.1.1) family. Trehalose transporter subfamily.

It is found in the cell membrane. In terms of biological role, low-capacity facilitative transporter for trehalose. Does not transport maltose, sucrose or lactose. Mediates the bidirectional transfer of trehalose. Responsible for the transport of trehalose synthesized in the fat body and the incorporation of trehalose into other tissues that require a carbon source, thereby regulating trehalose levels in the hemolymph. This chain is Facilitated trehalose transporter Tret1, found in Drosophila erecta (Fruit fly).